Reading from the N-terminus, the 620-residue chain is Glutathione-regulated potassium-efflux system protein KefC (620 aa).

A run of 12 helical transmembrane segments spans residues 4–24 (HTLI…PIAV), 26–46 (LGLG…PWGL), 54–74 (SILH…GLEL), 90–110 (GALQ…LLGL), 114–134 (VAEL…MQAM), 149–169 (FAVL…IPLL), 178–198 (MGAF…VVLL), 218–238 (VFSA…EEVG), 270–290 (GLLL…GTLI), 294–314 (LRIV…LWLI), 327–347 (WFAV…GAAQ), and 359–379 (SLTL…VILN). The RCK N-terminal domain maps to 399–518 (QPRVIIAGFG…AGVEKPERET (120 aa)). The segment at 597–620 (GWQGTEEGKHTGNMADEPETKPSS) is disordered.

Belongs to the monovalent cation:proton antiporter 2 (CPA2) transporter (TC 2.A.37) family. KefC subfamily. In terms of assembly, homodimer. Interacts with the regulatory subunit KefF.

It is found in the cell inner membrane. In terms of biological role, pore-forming subunit of a potassium efflux system that confers protection against electrophiles. Catalyzes K(+)/H(+) antiport. The polypeptide is Glutathione-regulated potassium-efflux system protein KefC (Escherichia coli (strain SMS-3-5 / SECEC)).